Here is a 477-residue protein sequence, read N- to C-terminus: Glycogen synthase (477 aa).

Lys-15 is a binding site for ADP-alpha-D-glucose.

Belongs to the glycosyltransferase 1 family. Bacterial/plant glycogen synthase subfamily.

It carries out the reaction [(1-&gt;4)-alpha-D-glucosyl](n) + ADP-alpha-D-glucose = [(1-&gt;4)-alpha-D-glucosyl](n+1) + ADP + H(+). It functions in the pathway glycan biosynthesis; glycogen biosynthesis. Functionally, synthesizes alpha-1,4-glucan chains using ADP-glucose. The protein is Glycogen synthase of Shigella dysenteriae serotype 1 (strain Sd197).